Consider the following 302-residue polypeptide: Protoheme IX farnesyltransferase (302 aa).

9 helical membrane-spanning segments follow: residues Val-28–Pro-48, Trp-50–Val-70, Ile-95–Leu-115, Leu-122–Leu-142, Ile-150–Gly-170, Ala-176–Ile-196, Leu-221–Gly-241, Ser-243–Val-263, and Ile-282–Ala-302.

This sequence belongs to the UbiA prenyltransferase family. Protoheme IX farnesyltransferase subfamily.

Its subcellular location is the cell inner membrane. The enzyme catalyses heme b + (2E,6E)-farnesyl diphosphate + H2O = Fe(II)-heme o + diphosphate. It functions in the pathway porphyrin-containing compound metabolism; heme O biosynthesis; heme O from protoheme: step 1/1. Functionally, converts heme B (protoheme IX) to heme O by substitution of the vinyl group on carbon 2 of heme B porphyrin ring with a hydroxyethyl farnesyl side group. This Marinobacter nauticus (strain ATCC 700491 / DSM 11845 / VT8) (Marinobacter aquaeolei) protein is Protoheme IX farnesyltransferase.